A 7388-amino-acid polypeptide reads, in one-letter code: Microtubule-actin cross-linking factor 1, isoforms 1/2/3/4/5 (7388 aa).

The disordered stretch occupies residues 1 to 47 (MSSSDEETLSERSCRSERSCRSERSYRSERSGSLSPCPPGDTLPWNL). Residues 1 to 295 (MSSSDEETLS…VITYVSSIYD (295 aa)) are actin-binding. Phosphoserine is present on S4. Positions 9–30 (LSERSCRSERSCRSERSYRSER) are enriched in basic and acidic residues. Residues S35 and S57 each carry the phosphoserine modification. 2 Calponin-homology (CH) domains span residues 78 to 181 (RVQK…LHFQ) and 194 to 298 (MSAK…DAFP). LRR repeat units follow at residues 148–171 (QRQV…LTLG) and 240–264 (LVDM…VAER). The residue at position 280 (S280) is a Phosphoserine. LRR repeat units lie at residues 377–399 (LYKL…YHPN) and 441–464 (LNCE…LESG). S814 carries the post-translational modification Phosphoserine. One can recognise an SH3 domain in the interval 868–925 (KNTISVKAVCDYRQIEITICKNDECVLEDNSQRTKWKVISPTGNEAMVPSVCFLIPPP). The LRR 5 repeat unit spans residues 1050-1073 (ISELKNIRLRLEEYEQRVVKRIQS). S1122 is modified (phosphoserine). LRR repeat units follow at residues 1128-1154 (VPTL…VYLN), 1187-1210 (LADL…VKDK), and 1257-1282 (HRVI…DYRA). A phosphoserine mark is found at S1367 and S1376. 5 Plectin repeats span residues 1577–1621 (LVLL…RELQ), 1654–1696 (LKIL…VLES), 1769–1809 (RLLE…CAIL), 1811–1848 (RQLQ…VILE), and 1855–1886 (GLLW…KILS). Phosphoserine occurs at positions 2006 and 2051. The interval 2051 to 2085 (SQNKEYPDREDCTTEKGKKTTVETEDSSVENPEQD) is disordered. Residues 2055-2072 (EYPDREDCTTEKGKKTTV) are compositionally biased toward basic and acidic residues. A Phosphoserine modification is found at S2077. 6 Plectin repeats span residues 2290 to 2332 (LNVL…KLME), 2367 to 2410 (NVLM…LERQ), 2411 to 2437 (VVTG…GLVD), 2501 to 2543 (RLLT…LKRV), 2581 to 2612 (EVQA…LTNE), and 2686 to 2730 (LKVL…ASHQ). Disordered stretches follow at residues 3013–3034 (EHDS…GKEA) and 3104–3174 (SEPF…NECK). Over residues 3115-3124 (EGLHYQESDG) the composition is skewed to basic and acidic residues. S3122 carries the phosphoserine modification. Polar residues predominate over residues 3129-3158 (TGPSQISKTDKSFQGTTRQETNYQDSWVTS). LRR repeat units follow at residues 3239–3262 (LTGE…SIED) and 3264–3283 (VTQR…LFKG). Over residues 3321 to 3332 (EKTPQEKLRESP) the composition is skewed to basic and acidic residues. Positions 3321 to 3350 (EKTPQEKLRESPGSEQTPFMTAPEGKGNGG) are disordered. The residue at position 3331 (S3331) is a Phosphoserine. 2 LRR repeats span residues 3646-3669 (QQDL…IQNR) and 3696-3720 (LTAL…TRVA). Spectrin repeat units follow at residues 3883–3957 (ELQK…NSFK) and 4000–4108 (QYHQ…SLLQ). S3927 carries the phosphoserine modification. The LRR 13 repeat unit spans residues 3936–3958 (KGDLRFVTISGQKVLDMENSFKE). LRR repeat units lie at residues 4125–4150 (LQSI…VIQE) and 4261–4287 (IQEL…ELSS). A Spectrin 3 repeat occupies 4466-4574 (RMEEVHKEAN…TVARQRQLEE (109 aa)). A phosphoserine mark is found at S4495, S4496, and S4521. 3 LRR repeats span residues 4511–4534 (KAFL…LAGL), 4601–4624 (GVLG…QFML), and 4769–4792 (KKRL…RINR). 2 Spectrin repeats span residues 4800–4904 (TQQF…SRLK) and 4909–5012 (KAQK…SLEE). Phosphoserine occurs at positions 4836 and 4962. LRR repeat units lie at residues 5051 to 5076 (NKNL…YLRN), 5172 to 5194 (NKIH…MLEE), and 5281 to 5304 (KEQV…LIQS). Spectrin repeat units follow at residues 5236–5341 (EDFY…QLQE), 5348–5450 (KFQD…QLED), and 5455–5557 (AKQF…LRTL). A Phosphothreonine modification is found at T5435. The tract at residues 5583 to 5603 (EELATSGGQSPTGEQIPQFQQ) is disordered. The segment covering 5588–5603 (SGGQSPTGEQIPQFQQ) has biased composition (polar residues). LRR repeat units follow at residues 5695-5719 (MALG…AFSI) and 5804-5828 (AQLP…QLRE). 9 Spectrin repeats span residues 5783–5885 (NQFW…ALDE), 6005–6110 (LAEK…KLED), 6115–6219 (AVQY…HKLE), 6225–6328 (LGQF…QQLQ), 6333–6439 (QAQG…KLEE), 6443–6547 (LATE…RSLD), 6552–6658 (RAKQ…KLEE), 6665–6766 (QFMD…RLEQ), and 6771–6874 (AEVF…QRLE). A phosphoserine mark is found at S5808 and S6032. K6210 is subject to N6-acetyllysine. One copy of the LRR 24 repeat lies at 6496-6519 (RDQIIELDQTGNQLKFLSQKQDVV). Positions 6951–6981 (PTHAPFIEKSRSGGRKSLSQPTPPPMPILSQ) are disordered. Phosphoserine is present on S6967. EF-hand domains are found at residues 7041-7076 (HKKS…SKFP) and 7077-7112 (TTKL…NKDA). Positions 7054, 7056, 7058, 7060, 7065, 7090, 7092, 7094, 7096, and 7101 each coordinate Ca(2+). Residues 7117–7189 (TDADKIEDEV…EFLVKNDPCR (73 aa)) form the GAR domain. Residues 7117 to 7388 (TDADKIEDEV…ASPRTPGPKR (272 aa)) are C-terminal tail. Residues 7205 to 7388 (PEGASQGMTP…ASPRTPGPKR (184 aa)) are disordered. Over residues 7225-7259 (SSRAASPTRSSSSASQSNHSCTSMPSSPATPASGT) the composition is skewed to low complexity. A Phosphothreonine modification is found at T7254. Over residues 7275–7299 (TFHSSRTSLAGDTSNSSSPASTGAK) the composition is skewed to polar residues. 2 positions are modified to phosphoserine: S7279 and S7292. Residues 7310–7324 (SRPGSRAGSRAGSRA) show a composition bias toward low complexity. Residues 7313-7328 (GSRAGSRAGSRASSRR) are 4 X 4 AA tandem repeats of [GS]-S-R-[AR]. Phosphoserine occurs at positions 7330 and 7333. Residues 7339 to 7361 (ETQSACSDTSESSAAGGQGNSRR) show a composition bias toward polar residues.

The protein belongs to the plakin or cytolinker family. In terms of assembly, isoform 2: Interacts with MAPRE1, CLASP1, CLASP2, AXIN1 and LRP6. Isoform 2: Found in a complex composed of MACF1, APC, AXIN1, CTNNB1 and GSK3B. Isoform 2: Interacts with GOLGA4. Isoform 2: Interacts with CAMSAP3. Post-translationally, phosphorylated on serine residues in the C-terminal tail by GSK3B. Phosphorylation inhibits microtubule-binding and this plays a critical role in bulge stem cell migration and skin wound repair. Wnt-signaling can repress phosphorylation. In terms of tissue distribution, isoform 2: Ubiquitously expressed. Isoform 1: Expressed in cell lines NCI-H460, A-549 and HaCaT. Isoform 4: Expressed in heart, lung, pituitary and placenta, not found in brain, kidney, liver, pancreas or skeletal muscle.

The protein resides in the cytoplasm. It is found in the cytoskeleton. It localises to the golgi apparatus. The protein localises to the cell membrane. Its subcellular location is the cell projection. The protein resides in the ruffle membrane. Its function is as follows. F-actin-binding protein which plays a role in cross-linking actin to other cytoskeletal proteins and also binds to microtubules. Plays an important role in ERBB2-dependent stabilization of microtubules at the cell cortex. Acts as a positive regulator of Wnt receptor signaling pathway and is involved in the translocation of AXIN1 and its associated complex (composed of APC, CTNNB1 and GSK3B) from the cytoplasm to the cell membrane. Has actin-regulated ATPase activity and is essential for controlling focal adhesions (FAs) assembly and dynamics. Interaction with CAMSAP3 at the minus ends of non-centrosomal microtubules tethers microtubules minus-ends to actin filaments, regulating focal adhesion size and cell migration. May play role in delivery of transport vesicles containing GPI-linked proteins from the trans-Golgi network through its interaction with GOLGA4. Plays a key role in wound healing and epidermal cell migration. Required for efficient upward migration of bulge cells in response to wounding and this function is primarily rooted in its ability to coordinate microtubule dynamics and polarize hair follicle stem cells. As a regulator of actin and microtubule arrangement and stabilization, it plays an essential role in neurite outgrowth, branching and spine formation during brain development. This is Microtubule-actin cross-linking factor 1, isoforms 1/2/3/4/5 from Homo sapiens (Human).